The following is a 520-amino-acid chain: 2-isopropylmalate synthase (520 aa).

The Pyruvate carboxyltransferase domain maps to 12–274 (IRIFDTTLRD…DSAINTPRIV (263 aa)). Positions 21, 209, 211, and 245 each coordinate Mn(2+). A regulatory domain region spans residues 396-520 (RLASMTISDV…VVAGKTAAVA (125 aa)).

The protein belongs to the alpha-IPM synthase/homocitrate synthase family. LeuA type 1 subfamily. As to quaternary structure, homodimer. Requires Mn(2+) as cofactor.

The protein resides in the cytoplasm. The catalysed reaction is 3-methyl-2-oxobutanoate + acetyl-CoA + H2O = (2S)-2-isopropylmalate + CoA + H(+). The protein operates within amino-acid biosynthesis; L-leucine biosynthesis; L-leucine from 3-methyl-2-oxobutanoate: step 1/4. In terms of biological role, catalyzes the condensation of the acetyl group of acetyl-CoA with 3-methyl-2-oxobutanoate (2-ketoisovalerate) to form 3-carboxy-3-hydroxy-4-methylpentanoate (2-isopropylmalate). The sequence is that of 2-isopropylmalate synthase from Xanthomonas axonopodis pv. citri (strain 306).